Here is a 399-residue protein sequence, read N- to C-terminus: Putative 8-amino-7-oxononanoate synthase (399 aa).

Arg-24 provides a ligand contact to substrate. Residue 111 to 112 participates in pyridoxal 5'-phosphate binding; the sequence is GW. Substrate is bound at residue His-141. Residues Ser-189, 214 to 217, and 243 to 246 each bind pyridoxal 5'-phosphate; these read DEAH and TFSK. Lys-246 is subject to N6-(pyridoxal phosphate)lysine. Thr-360 is a binding site for substrate.

It belongs to the class-II pyridoxal-phosphate-dependent aminotransferase family. BioF subfamily. Homodimer. The cofactor is pyridoxal 5'-phosphate.

It catalyses the reaction 6-carboxyhexanoyl-[ACP] + L-alanine + H(+) = (8S)-8-amino-7-oxononanoate + holo-[ACP] + CO2. It participates in cofactor biosynthesis; biotin biosynthesis. Catalyzes the decarboxylative condensation of pimeloyl-[acyl-carrier protein] and L-alanine to produce 8-amino-7-oxononanoate (AON), [acyl-carrier protein], and carbon dioxide. In Bordetella bronchiseptica (strain ATCC BAA-588 / NCTC 13252 / RB50) (Alcaligenes bronchisepticus), this protein is Putative 8-amino-7-oxononanoate synthase (bioF).